Reading from the N-terminus, the 378-residue chain is Lipoyl synthase, mitochondrial (378 aa).

Positions 109, 114, 120, 140, 144, 147, and 356 each coordinate [4Fe-4S] cluster. Positions 125–345 (ETGTATATIM…QTLGMEMGFR (221 aa)) constitute a Radical SAM core domain.

The protein belongs to the radical SAM superfamily. Lipoyl synthase family. Requires [4Fe-4S] cluster as cofactor.

It localises to the mitochondrion. It carries out the reaction [[Fe-S] cluster scaffold protein carrying a second [4Fe-4S](2+) cluster] + N(6)-octanoyl-L-lysyl-[protein] + 2 oxidized [2Fe-2S]-[ferredoxin] + 2 S-adenosyl-L-methionine + 4 H(+) = [[Fe-S] cluster scaffold protein] + N(6)-[(R)-dihydrolipoyl]-L-lysyl-[protein] + 4 Fe(3+) + 2 hydrogen sulfide + 2 5'-deoxyadenosine + 2 L-methionine + 2 reduced [2Fe-2S]-[ferredoxin]. It functions in the pathway protein modification; protein lipoylation via endogenous pathway; protein N(6)-(lipoyl)lysine from octanoyl-[acyl-carrier-protein]: step 2/2. Functionally, catalyzes the radical-mediated insertion of two sulfur atoms into the C-6 and C-8 positions of the octanoyl moiety bound to the lipoyl domains of lipoate-dependent enzymes, thereby converting the octanoylated domains into lipoylated derivatives. This Medicago truncatula (Barrel medic) protein is Lipoyl synthase, mitochondrial.